We begin with the raw amino-acid sequence, 229 residues long: Potassium/proton antiporter CemA (229 aa).

The next 4 helical transmembrane spans lie at 7 to 27 (FTPLLYLASIVFLPWWISLSF), 114 to 134 (LICFVILSGYSILGNEELLIL), 154 to 174 (ILLLTDLCIGFHSPHGWELMI), and 189 to 209 (IISGLVSTFPVILDTIFKYWI).

This sequence belongs to the CemA family.

Its subcellular location is the plastid. The protein localises to the chloroplast inner membrane. The enzyme catalyses K(+)(in) + H(+)(out) = K(+)(out) + H(+)(in). In terms of biological role, contributes to K(+)/H(+) antiport activity by supporting proton efflux to control proton extrusion and homeostasis in chloroplasts in a light-dependent manner to modulate photosynthesis. Prevents excessive induction of non-photochemical quenching (NPQ) under continuous-light conditions. Indirectly promotes efficient inorganic carbon uptake into chloroplasts. The protein is Potassium/proton antiporter CemA of Gossypium barbadense (Sea Island cotton).